A 116-amino-acid polypeptide reads, in one-letter code: Phosphoribosyl-AMP cyclohydrolase (116 aa).

Residue D82 participates in Mg(2+) binding. Zn(2+) is bound at residue C83. Mg(2+)-binding residues include D84 and D86. Residues C99 and C106 each coordinate Zn(2+).

This sequence belongs to the PRA-CH family. As to quaternary structure, homodimer. It depends on Mg(2+) as a cofactor. Zn(2+) serves as cofactor.

Its subcellular location is the cytoplasm. The catalysed reaction is 1-(5-phospho-beta-D-ribosyl)-5'-AMP + H2O = 1-(5-phospho-beta-D-ribosyl)-5-[(5-phospho-beta-D-ribosylamino)methylideneamino]imidazole-4-carboxamide. It participates in amino-acid biosynthesis; L-histidine biosynthesis; L-histidine from 5-phospho-alpha-D-ribose 1-diphosphate: step 3/9. In terms of biological role, catalyzes the hydrolysis of the adenine ring of phosphoribosyl-AMP. The protein is Phosphoribosyl-AMP cyclohydrolase of Saccharopolyspora erythraea (strain ATCC 11635 / DSM 40517 / JCM 4748 / NBRC 13426 / NCIMB 8594 / NRRL 2338).